The chain runs to 596 residues: Estrogen receptor (596 aa).

Positions 1–185 are modulating (transactivation AF-1); mediates interaction with MACROD1; that stretch reads MTMTLHTKAS…AMESAKETRY (185 aa). S10 is a glycosylation site (O-linked (GlcNAc) serine). Positions 36-48 are required for interaction with NCOA1; that stretch reads ERPLGEVYMDSSK. The tract at residues 36–175 is interaction with DDX5; self-association; that stretch reads ERPLGEVYMD…LASTSDKGSM (140 aa). Phosphoserine; by CDK2 occurs at positions 104 and 106. S119 bears the Phosphoserine mark. The interval 144 to 175 is disordered; it reads EAGPPAYYRPNSDNRRQGGRERLASTSDKGSM. Residues 155-166 are compositionally biased toward basic and acidic residues; that stretch reads SDNRRQGGRERL. S168 carries the post-translational modification Phosphoserine; by CK2. NR C4-type zinc fingers lie at residues 186-206 and 222-246; these read CAVCNDYASGYHYGVWSCEGC and CPATNQCTIDKNRRKSCQACRLRKC. The segment at residues 186-251 is a DNA-binding region (nuclear receptor); that stretch reads CAVCNDYASG…RLRKCYEVGM (66 aa). The mediates interaction with DNTTIP2 stretch occupies residues 186–311; it reads CAVCNDYASG…TKKNSPVLSL (126 aa). The interval 252-311 is hinge; it reads MKGGIRKDRRGGRMLKHKRQRDDGEGRNEAVPSGDMRAANLWPSPIMIKHTKKNSPVLSL. A compositionally biased stretch (basic residues) spans 259–270; sequence DRRGGRMLKHKR. Residues 259–285 form a disordered region; the sequence is DRRGGRMLKHKRQRDDGEGRNEAVPSG. R261 is modified (asymmetric dimethylarginine; by PRMT1). An interaction with AKAP13 region spans residues 263 to 596; the sequence is GRMLKHKRQR…GEAENFPSTV (334 aa). Residues 265-595 are self-association; it reads MLKHKRQRDD…TGEAENFPST (331 aa). Residues 312 to 548 enclose the NR LBD domain; the sequence is TADQMISALL…DLLLEMLDAH (237 aa). The transactivation AF-2 stretch occupies residues 312–595; that stretch reads TADQMISALL…TGEAENFPST (284 aa). Residues E354 and R395 each coordinate 17beta-estradiol. C448 is lipidated: S-palmitoyl cysteine. A 17beta-estradiol-binding site is contributed by H525. Residue Y538 is modified to Phosphotyrosine; by Tyr-kinases. The O-linked (GlcNAc) threonine glycan is linked to T572.

It belongs to the nuclear hormone receptor family. NR3 subfamily. As to quaternary structure, binds DNA as a homodimer. Can form a heterodimer with ESR2. Interacts with coactivator NCOA5. Interacts with PELP1, the interaction is enhanced by 17-beta-estradiol; the interaction increases ESR1 transcriptional activity. Interacts with NCOA7; the interaction is ligand-inducible. Interacts with AKAP13, CUEDC2, HEXIM1, KDM5A, MAP1S, SMARD1, and UBE1C. Interacts with MUC1; the interaction is stimulated by 7 beta-estradiol (E2) and enhances ESR1-mediated transcription. Interacts with DNTTIP2, and UIMC1. Interacts with KMT2D/MLL2. Interacts with ATAD2; the interaction is enhanced by estradiol. Interacts with KIF18A and LDB1. Interacts with RLIM (via its C-terminus). Interacts with MACROD1. Interacts with SH2D4A and PLCG. Interacts with SH2D4A; the interaction blocks binding to PLCG and inhibits estrogen-induced cell proliferation. Interacts with DYNLL1. Interacts with CCDC62; the interaction requires estradiol and appears to enhance the transcription of target genes. Interacts with NR2C1; the interaction prevents homodimerization of ESR1 and suppresses its transcriptional activity and cell growth. Interacts with DNAAF4. Interacts with PRMT2. Interacts with RBFOX2. Interacts with EP300; the interaction is estrogen-dependent and enhanced by CITED1. Interacts with CITED1; the interaction is estrogen-dependent. Interacts with FAM120B, FOXL2, PHB2 and SLC30A9. Interacts with coactivators NCOA3 and NCOA6. Interacts with STK3/MST2 only in the presence of SAV1 and vice-versa. Binds to CSNK1D. Interacts with NCOA2; NCOA2 can interact with ESR1 AF-1 and AF-2 domains simultaneously and mediate their transcriptional synergy. Interacts with DDX5. Interacts with NCOA1; the interaction seems to require a self-association of N-terminal and C-terminal regions. Interacts with ZNF366, DDX17, NFKB1, RELA, SP1 and SP3. Interacts with NRIP1. Interacts with GPER1; the interaction occurs in an estrogen-dependent manner. Interacts with CLOCK and the interaction is stimulated by estrogen. Interacts with TRIP4 (ufmylated); estrogen dependent. Interacts with LMTK3; the interaction phosphorylates ESR1 (in vitro) and protects it against proteasomal degradation. Interacts with CCAR2 (via N-terminus) in a ligand-independent manner. Interacts with ZFHX3. Interacts with SFR1 in a ligand-dependent and -independent manner. Interacts with DCAF13, LATS1 and DCAF1; regulates ESR1 ubiquitination and ubiquitin-mediated proteasomal degradation. Interacts (via DNA-binding domain) with POU4F2 (C-terminus); this interaction increases the estrogen receptor ESR1 transcriptional activity in a DNA- and ligand 17-beta-estradiol-independent manner. Interacts with ESRRB isoform 1. Interacts with UBE3A and WBP2. Interacts with GTF2B. Interacts with RBM39. In the absence of hormonal ligand, interacts with TACC1. Interacts with PI3KR1 or PI3KR2 and PTK2/FAK1. Interacts with SRC. Interacts with BAG1; the interaction is promoted in the absence of estradiol (17-beta-estradiol/E2). Interacts with and ubiquitinated by STUB1; the interaction is promoted in the absence of estradiol (17-beta-estradiol/E2). Interacts with NEDD8. In terms of processing, glycosylated; contains N-acetylglucosamine, probably O-linked. Ubiquitinated; regulated by LATS1 via DCAF1 it leads to ESR1 proteasomal degradation. Deubiquitinated by OTUB1. Ubiquitinated by STUB1/CHIP; in the CA1 hippocampal region following loss of endogenous circulating estradiol (17-beta-estradiol/E2). Ubiquitinated by UBR5, leading to its degradation: UBR5 specifically recognizes and binds ligand-bound ESR1 when it is not associated with coactivators (NCOAs). In presence of NCOAs, the UBR5-degron is not accessible, preventing its ubiquitination and degradation. Post-translationally, phosphorylated by cyclin A/CDK2 and CK1. Phosphorylation probably enhances transcriptional activity. Dephosphorylation at Ser-119 by PPP5C inhibits its transactivation activity. Phosphorylated by LMTK3 (in vitro). In terms of processing, palmitoylated at Cys-448 by ZDHHC7 and ZDHHC21. Palmitoylation is required for plasma membrane targeting and for rapid intracellular signaling via ERK and AKT kinases and cAMP generation, but not for signaling mediated by the nuclear hormone receptor. Dimethylated by PRMT1 at Arg-261. The methylation may favor cytoplasmic localization. Demethylated by JMJD6 at Arg-261.

Its subcellular location is the nucleus. It is found in the cytoplasm. It localises to the golgi apparatus. The protein resides in the cell membrane. Nuclear hormone receptor. The steroid hormones and their receptors are involved in the regulation of eukaryotic gene expression and affect cellular proliferation and differentiation in target tissues. Ligand-dependent nuclear transactivation involves either direct homodimer binding to a palindromic estrogen response element (ERE) sequence or association with other DNA-binding transcription factors, such as AP-1/c-Jun, c-Fos, ATF-2, Sp1 and Sp3, to mediate ERE-independent signaling. Ligand binding induces a conformational change allowing subsequent or combinatorial association with multiprotein coactivator complexes through LXXLL motifs of their respective components. Mutual transrepression occurs between the estrogen receptor (ER) and NF-kappa-B in a cell-type specific manner. Decreases NF-kappa-B DNA-binding activity and inhibits NF-kappa-B-mediated transcription from the IL6 promoter and displace RELA/p65 and associated coregulators from the promoter. Recruited to the NF-kappa-B response element of the CCL2 and IL8 promoters and can displace CREBBP. Present with NF-kappa-B components RELA/p65 and NFKB1/p50 on ERE sequences. Can also act synergistically with NF-kappa-B to activate transcription involving respective recruitment adjacent response elements; the function involves CREBBP. Can activate the transcriptional activity of TFF1. Also mediates membrane-initiated estrogen signaling involving various kinase cascades. Essential for MTA1-mediated transcriptional regulation of BRCA1 and BCAS3. Maintains neuronal survival in response to ischemic reperfusion injury when in the presence of circulating estradiol (17-beta-estradiol/E2). The sequence is that of Estrogen receptor (ESR1) from Bos taurus (Bovine).